A 755-amino-acid polypeptide reads, in one-letter code: Tryptophan 2-monooxygenase (755 aa).

Residues Ser247, Glu267, Lys275, and Arg295 each coordinate FMN. Arg295 is a substrate binding site.

It belongs to the tryptophan 2-monooxygenase family. The cofactor is FMN.

It catalyses the reaction L-tryptophan + O2 = indole-3-acetamide + CO2 + H2O. The protein operates within plant hormone metabolism; auxin biosynthesis. This Rhizobium radiobacter (Agrobacterium tumefaciens) protein is Tryptophan 2-monooxygenase (tms1).